The following is a 346-amino-acid chain: Queuosine 5'-phosphate N-glycosylase/hydrolase (346 aa).

His-49, Phe-243, Asp-245, Asp-310, and Asp-315 together coordinate queuine. The Nucleophile or transition state stabilizer role is filled by Asp-245.

Belongs to the QNG1 protein family.

It carries out the reaction queuosine 5'-phosphate + H2O = queuine + D-ribose 5-phosphate. Its function is as follows. Catalyzes the hydrolysis of queuosine 5'-phosphate, releasing the nucleobase queuine (q). Is required for salvage of queuine from exogenous queuosine (Q) that is imported and then converted to queuosine 5'-phosphate intracellularly. This chain is Queuosine 5'-phosphate N-glycosylase/hydrolase, found in Schizosaccharomyces pombe (strain 972 / ATCC 24843) (Fission yeast).